Here is a 712-residue protein sequence, read N- to C-terminus: U11/U12 small nuclear ribonucleoprotein 48 kDa protein (712 aa).

Residues 98–125 (FVRCPFDSNHFMPPEALFLHSLRCPNTL) form a CHHC U11-48K-type zinc finger. Zn(2+)-binding residues include Cys101, His107, His117, and Cys121. The tract at residues 562-712 (QSRSPIGNDQ…EDRYIPTEKE (151 aa)) is disordered. Basic and acidic residues-rich tracts occupy residues 585-595 (KQWKGENRADI), 603-614 (QNSDKVKRHDEY), 629-663 (KHSD…HSIE), 672-693 (SSRE…DRRS), and 702-712 (FEDRYIPTEKE).

In terms of assembly, component of the U11/U12 snRNPs that are part of the U12-type spliceosome. Not found in the major spliceosome.

The protein localises to the nucleus. Likely involved in U12-type 5' splice site recognition. The protein is U11/U12 small nuclear ribonucleoprotein 48 kDa protein (SNRNP48) of Arabidopsis thaliana (Mouse-ear cress).